We begin with the raw amino-acid sequence, 459 residues long: Cysteine--tRNA ligase (459 aa).

Zn(2+) is bound at residue C27. Positions 29–39 match the 'HIGH' region motif; it reads PTVYDDAHLGH. Zn(2+) contacts are provided by C202, H231, and E235. The 'KMSKS' region motif lies at 263-267; sequence KMSKS. K266 serves as a coordination point for ATP.

It belongs to the class-I aminoacyl-tRNA synthetase family. Monomer. Zn(2+) is required as a cofactor.

It is found in the cytoplasm. It carries out the reaction tRNA(Cys) + L-cysteine + ATP = L-cysteinyl-tRNA(Cys) + AMP + diphosphate. In Campylobacter fetus subsp. fetus (strain 82-40), this protein is Cysteine--tRNA ligase.